Here is a 697-residue protein sequence, read N- to C-terminus: Putative flagellar export/assembly protein LfhA (697 aa).

A run of 7 helical transmembrane segments spans residues 19–39, 40–60, 66–86, 116–136, 204–224, 242–262, and 280–302; these read VPLVILCILAMVILPLPPALL, DILFTFNIVLAVMVLLVAVSA, FSLFPTILLITTLMRLTLNVA, GNFVVGFVVFIILMIINFIVV, AIAGMMILAINLIGGVCIGIF, IGDGLVAQIPSLLLSTAAAII, and LLASPSVLYTATGIMFVLAVVPG.

Belongs to the FHIPEP (flagella/HR/invasion proteins export pore) family.

The protein resides in the cell inner membrane. Part of the flagellar gene cluster Flag-2. However, the Flag-2 flagellar system could be inactive in strain 042 due to a frameshift in lfgC. The polypeptide is Putative flagellar export/assembly protein LfhA (Escherichia coli O44:H18 (strain 042 / EAEC)).